A 182-amino-acid polypeptide reads, in one-letter code: CDP-diacylglycerol--glycerol-3-phosphate 3-phosphatidyltransferase (182 aa).

Topologically, residues 1-12 (MQLNIPTWLTLF) are cytoplasmic. A helical transmembrane segment spans residues 13-37 (RVVMIPFFVLAFYLPFKWAPLCCAL). Over 38-60 (IFVLAAVTDWFDGFLARRWKQTT) the chain is Periplasmic. Residues 61-81 (RFGAFLDPVADKVMVAMALVL) form a helical membrane-spanning segment. At 82–86 (VAEHF) the chain is on the cytoplasmic side. The chain crosses the membrane as a helical span at residues 87–107 (HSWWITLPAATMIAREIIISA). Residues 108-145 (LREWMAEIGKRSSVAVSWIGKVKTTAQMLALVTLLWRP) are Periplasmic-facing. The chain crosses the membrane as a helical span at residues 146–168 (DDIVSGIGIAALYVAAVLTFWSM). The Cytoplasmic segment spans residues 169–181 (FQYLYAARHDLFE).

Belongs to the CDP-alcohol phosphatidyltransferase class-I family.

The protein resides in the cell inner membrane. It carries out the reaction a CDP-1,2-diacyl-sn-glycerol + sn-glycerol 3-phosphate = a 1,2-diacyl-sn-glycero-3-phospho-(1'-sn-glycero-3'-phosphate) + CMP + H(+). The protein operates within phospholipid metabolism; phosphatidylglycerol biosynthesis; phosphatidylglycerol from CDP-diacylglycerol: step 1/2. Functionally, catalyzes the conversion of cytidine diphosphate diacylglycerol (CDP-DG) and glycerol 3-phosphate into phosphatidylglycerol. Essential for the synthesis of anionic phospholipids, thereby playing a role in balancing the ratio of zwitterionic and anionic phospholipids, which is thought to be important for normal membrane function. The chain is CDP-diacylglycerol--glycerol-3-phosphate 3-phosphatidyltransferase from Sodalis glossinidius (strain morsitans).